The sequence spans 432 residues: UDP-N-acetylmuramate--L-alanine ligase (432 aa).

108–114 (GAHGKTS) is a binding site for ATP.

This sequence belongs to the MurCDEF family.

Its subcellular location is the cytoplasm. The catalysed reaction is UDP-N-acetyl-alpha-D-muramate + L-alanine + ATP = UDP-N-acetyl-alpha-D-muramoyl-L-alanine + ADP + phosphate + H(+). It functions in the pathway cell wall biogenesis; peptidoglycan biosynthesis. In terms of biological role, cell wall formation. This is UDP-N-acetylmuramate--L-alanine ligase from Bacillus pumilus (strain SAFR-032).